A 226-amino-acid polypeptide reads, in one-letter code: Fibrillarin-like rRNA/tRNA 2'-O-methyltransferase (226 aa).

S-adenosyl-L-methionine-binding positions include 85-86, 104-105, 129-130, and 149-152; these read TT, EF, DA, and DVAQ.

It belongs to the methyltransferase superfamily. Fibrillarin family. Interacts with nop5. Component of box C/D small ribonucleoprotein (sRNP) particles that contain rpl7ae, FlpA and nop5, plus a guide RNA.

Functionally, involved in pre-rRNA and tRNA processing. Utilizes the methyl donor S-adenosyl-L-methionine to catalyze the site-specific 2'-hydroxyl methylation of ribose moieties in rRNA and tRNA. Site specificity is provided by a guide RNA that base pairs with the substrate. Methylation occurs at a characteristic distance from the sequence involved in base pairing with the guide RNA. The chain is Fibrillarin-like rRNA/tRNA 2'-O-methyltransferase from Thermococcus onnurineus (strain NA1).